The chain runs to 190 residues: Heme-binding protein 1 (190 aa).

The protein belongs to the HEBP family. In terms of assembly, monomer.

It is found in the cytoplasm. May bind free porphyrinogens that may be present in the cell and thus facilitate removal of these potentially toxic compound. Binds with a high affinity to one molecule of heme or porphyrins. It binds metalloporphyrins, free porphyrins and N-methylprotoporphyrin with similar affinities. In Xenopus tropicalis (Western clawed frog), this protein is Heme-binding protein 1 (hebp1).